A 167-amino-acid chain; its full sequence is Ribosome maturation factor RimM (167 aa).

The 72-residue stretch at 94–165 (ENEFYYSDII…KIIITPMEGL (72 aa)) folds into the PRC barrel domain.

Belongs to the RimM family. Binds ribosomal protein uS19.

The protein resides in the cytoplasm. Functionally, an accessory protein needed during the final step in the assembly of 30S ribosomal subunit, possibly for assembly of the head region. Essential for efficient processing of 16S rRNA. May be needed both before and after RbfA during the maturation of 16S rRNA. It has affinity for free ribosomal 30S subunits but not for 70S ribosomes. The chain is Ribosome maturation factor RimM from Staphylococcus aureus (strain MRSA252).